The chain runs to 130 residues: Ribosome-binding factor A (130 aa).

This sequence belongs to the RbfA family. Monomer. Binds 30S ribosomal subunits, but not 50S ribosomal subunits or 70S ribosomes.

It localises to the cytoplasm. One of several proteins that assist in the late maturation steps of the functional core of the 30S ribosomal subunit. Associates with free 30S ribosomal subunits (but not with 30S subunits that are part of 70S ribosomes or polysomes). Required for efficient processing of 16S rRNA. May interact with the 5'-terminal helix region of 16S rRNA. This is Ribosome-binding factor A from Prochlorococcus marinus (strain MIT 9301).